Reading from the N-terminus, the 678-residue chain is Chloride channel protein ClC-Kb (678 aa).

The Cytoplasmic segment spans residues 1–50 (MEELVGLREGSSGNPVALRELWSPCPRLRRGIRGGLEWLKQKLFRVGEDW). Helical transmembrane passes span 51 to 82 (YFLM…KWLY) and 91 to 111 (LRYL…SGFS). Positions 116 to 127 (PFSGGSGIPELK) form an intramembrane region, helical. A chloride-binding site is contributed by S121. A run of 2 helical transmembrane segments spans residues 141–160 (IKNF…TGST) and 161–180 (LFLG…AAYL). An intramembrane region (helical) is located at residues 203 to 224 (AGAAVGVATVFAAPFSGVLFCI). The helical transmembrane segment at 236 to 255 (YWRGFFAATCGAFMFRLLAV) threads the bilayer. Positions 259, 261, 278, and 281 each coordinate Ca(2+). Helical transmembrane passes span 282–310 (IFFF…LAFT) and 325–342 (PLYA…TYPP). An intramembrane region (helical) is located at residues 349-360 (ASRLSMREHLDT). N-linked (GlcNAc...) asparagine glycosylation is present at N364. 2 consecutive transmembrane segments (helical) span residues 400–420 (GTLA…TTIP) and 421–440 (MPAG…GRLL). F426 is a chloride binding site. The helical intramembrane region spans 464-496 (GGYALAGAAAFSGAVTHSISTALLAFELTGQIV). A helical membrane pass occupies residues 500 to 520 (PVLMAVLAANAIAQSCQPSFY). At 521-678 (DGTIMVKKLP…SWVERQHTGF (158 aa)) the chain is on the cytoplasmic side. CBS domains follow at residues 551–612 (MRRA…ARAS) and 620–678 (DILA…HTGF).

This sequence belongs to the chloride channel (TC 2.A.49) family. CLCNKB subfamily. In terms of assembly, homodimer. Interacts with BSND. In terms of processing, N-glycosylated. Expressed predominantly in the kidney.

It is found in the basolateral cell membrane. The catalysed reaction is chloride(in) = chloride(out). It catalyses the reaction iodide(out) = iodide(in). It carries out the reaction nitrate(in) = nitrate(out). The enzyme catalyses bromide(in) = bromide(out). In terms of biological role, anion-selective channel permeable to small monovalent anions with ion selectivity for chloride &gt; bromide &gt; nitrate &gt; iodide. Forms a homodimeric channel where each subunit has its own ion conduction pathway. May conduct double-barreled currents controlled by two types of gates, two fast gates that control each subunit independently and a slow common gate that opens and shuts off both subunits simultaneously. Assembles with the regulatory subunit BSND/Barttin for sorting at the basolateral plasma membrane domain and functional switch to the ion conducting state. CLCNKB:BSND channels display mostly a linear current-voltage relationship controlled by common gate. Mediates chloride conductance along nephron segments, namely the thick ascending limb of Henle's loop, convoluted tubule and the collecting duct, contributing to the maintenance of systemic acid-base and electrolyte homeostasis. Conducts chloride currents in the stria vascularis of the inner ear to establish the endocochlear potential necessary for normal hearing. This chain is Chloride channel protein ClC-Kb (CLCNKB), found in Oryctolagus cuniculus (Rabbit).